A 366-amino-acid polypeptide reads, in one-letter code: Histidinol-phosphate aminotransferase 1 (366 aa).

Lys-226 carries the post-translational modification N6-(pyridoxal phosphate)lysine.

The protein belongs to the class-II pyridoxal-phosphate-dependent aminotransferase family. Histidinol-phosphate aminotransferase subfamily. Homodimer. It depends on pyridoxal 5'-phosphate as a cofactor.

The catalysed reaction is L-histidinol phosphate + 2-oxoglutarate = 3-(imidazol-4-yl)-2-oxopropyl phosphate + L-glutamate. It functions in the pathway amino-acid biosynthesis; L-histidine biosynthesis; L-histidine from 5-phospho-alpha-D-ribose 1-diphosphate: step 7/9. This chain is Histidinol-phosphate aminotransferase 1, found in Mannheimia succiniciproducens (strain KCTC 0769BP / MBEL55E).